Consider the following 342-residue polypeptide: N-acetyl-gamma-glutamyl-phosphate reductase (342 aa).

Residue cysteine 149 is part of the active site.

Belongs to the NAGSA dehydrogenase family. Type 1 subfamily.

Its subcellular location is the cytoplasm. The catalysed reaction is N-acetyl-L-glutamate 5-semialdehyde + phosphate + NADP(+) = N-acetyl-L-glutamyl 5-phosphate + NADPH + H(+). The protein operates within amino-acid biosynthesis; L-arginine biosynthesis; N(2)-acetyl-L-ornithine from L-glutamate: step 3/4. Catalyzes the NADPH-dependent reduction of N-acetyl-5-glutamyl phosphate to yield N-acetyl-L-glutamate 5-semialdehyde. This is N-acetyl-gamma-glutamyl-phosphate reductase from Paracoccus denitrificans (strain Pd 1222).